A 68-amino-acid polypeptide reads, in one-letter code: Large ribosomal subunit protein uL29 (68 aa).

The protein belongs to the universal ribosomal protein uL29 family.

The sequence is that of Large ribosomal subunit protein uL29 from Streptococcus gordonii (strain Challis / ATCC 35105 / BCRC 15272 / CH1 / DL1 / V288).